The chain runs to 656 residues: Probable Xaa-Pro aminopeptidase P (656 aa).

Asp-453, Asp-464, Glu-562, and Glu-576 together coordinate Mn(2+).

The protein belongs to the peptidase M24B family. Mn(2+) is required as a cofactor.

The enzyme catalyses Release of any N-terminal amino acid, including proline, that is linked to proline, even from a dipeptide or tripeptide.. Functionally, catalyzes the removal of a penultimate prolyl residue from the N-termini of peptides. This chain is Probable Xaa-Pro aminopeptidase P (ampp), found in Pyrenophora teres f. teres (strain 0-1) (Barley net blotch fungus).